A 70-amino-acid chain; its full sequence is Brevinin-1Vb (70 aa).

The signal sequence occupies residues 1-22 (MFTLKKSLLLLFFLGTINLSLC). Residues 23–44 (EEERNAEEERRDEPDEMNVEVE) constitute a propeptide that is removed on maturation. A disulfide bridge links Cys-64 with Cys-70.

Expressed by the skin glands.

Its subcellular location is the secreted. In terms of biological role, antimicrobial peptide. This Odorrana versabilis (Chinese bamboo leaf odorous frog) protein is Brevinin-1Vb.